A 308-amino-acid polypeptide reads, in one-letter code: MSEITAAMVKELREKTGAGMMDCKKALAETSGDMEAAIDWLRAKGIAKADKKSGRTAAEGLVGVSSEGTKAVVVEVNSETDFVARNDAFQDLVRGIAKVAVSTNGTVEAVAAATYPASGKSVSDTIKDAIATIGENMNLRRSIALSVEDGVVATYIHNAVSDGLGKLGVLVALKSTGDKEALNAIGRQVAMHIAATAPLAIRPEEVDAAVAERERNVFIEQSRASGKPDNIIEKMVEGRMRKFFEEVALLSQSFVINPDLTVAAAIKEAEKAVGAPIEVAGMARLLLGEGVEKEETDFAAEVAAAVKG.

An involved in Mg(2+) ion dislocation from EF-Tu region spans residues 80 to 83; sequence TDFV.

This sequence belongs to the EF-Ts family.

It is found in the cytoplasm. Associates with the EF-Tu.GDP complex and induces the exchange of GDP to GTP. It remains bound to the aminoacyl-tRNA.EF-Tu.GTP complex up to the GTP hydrolysis stage on the ribosome. This is Elongation factor Ts from Rhizobium etli (strain ATCC 51251 / DSM 11541 / JCM 21823 / NBRC 15573 / CFN 42).